Here is a 476-residue protein sequence, read N- to C-terminus: Protein PAL OF QUIRKY (476 aa).

The signal sequence occupies residues 1–14 (MTTVSSAFATVAEG). A disordered region spans residues 204-256 (TRRTNSGTSGSGDGNGGICGQESMMLETNSSFGSTSSSVSSSNLPPIKSSGED). Gly residues predominate over residues 212 to 222 (SGSGDGNGGIC). Over residues 233–252 (SSFGSTSSSVSSSNLPPIKS) the composition is skewed to low complexity.

In terms of assembly, homodimer. Interacts with QKY and SUB/SCM at the plasma membrane. Observed in seedlings, roots, shoots, leaves, stems, inflorescence and flowers.

The protein localises to the cell membrane. The protein resides in the endomembrane system. In terms of biological role, collaboratively with SUB and QKY, regulates cell growth anisotropy during gynoecium development, thus linking together cell-cell communication and cellular growth. This chain is Protein PAL OF QUIRKY, found in Arabidopsis thaliana (Mouse-ear cress).